The sequence spans 524 residues: Chromosomal replication initiator protein DnaA (524 aa).

The segment at 1–85 (MSQNSSSLLE…TRVLSLRMGR (85 aa)) is domain I, interacts with DnaA modulators. The interval 85–182 (RSFSLAVSVE…TPAHNPNREV (98 aa)) is domain II. The disordered stretch occupies residues 95 to 183 (PEQEIPETPA…PAHNPNREVS (89 aa)). Over residues 148–158 (APEPHPAPIAD) the composition is skewed to pro residues. Positions 183-399 (SLNPKYTFES…GALIRVSAYS (217 aa)) are domain III, AAA+ region. The ATP site is built by glycine 227, glycine 229, lysine 230, and threonine 231. The tract at residues 400-524 (SLINQPIDKE…TQLIKSRGRN (125 aa)) is domain IV, binds dsDNA.

It belongs to the DnaA family. In terms of assembly, oligomerizes as a right-handed, spiral filament on DNA at oriC.

The protein resides in the cytoplasm. Functionally, plays an essential role in the initiation and regulation of chromosomal replication. ATP-DnaA binds to the origin of replication (oriC) to initiate formation of the DNA replication initiation complex once per cell cycle. Binds the DnaA box (a 9 base pair repeat at the origin) and separates the double-stranded (ds)DNA. Forms a right-handed helical filament on oriC DNA; dsDNA binds to the exterior of the filament while single-stranded (ss)DNA is stabiized in the filament's interior. The ATP-DnaA-oriC complex binds and stabilizes one strand of the AT-rich DNA unwinding element (DUE), permitting loading of DNA polymerase. After initiation quickly degrades to an ADP-DnaA complex that is not apt for DNA replication. Binds acidic phospholipids. The chain is Chromosomal replication initiator protein DnaA from Corynebacterium glutamicum (strain ATCC 13032 / DSM 20300 / JCM 1318 / BCRC 11384 / CCUG 27702 / LMG 3730 / NBRC 12168 / NCIMB 10025 / NRRL B-2784 / 534).